A 788-amino-acid polypeptide reads, in one-letter code: Phenylalanine--tRNA ligase beta subunit (788 aa).

The 109-residue stretch at 39 to 147 (FNVSGEIITA…DPVELGVNVV (109 aa)) folds into the tRNA-binding domain. Residues 399–472 (IEPKKVMLRK…RIYGYEKVES (74 aa)) form the B5 domain. D450, D456, E459, and E460 together coordinate Mg(2+). The 94-residue stretch at 694 to 787 (PRFPAVRRDI…AEREFGIRRR (94 aa)) folds into the FDX-ACB domain.

It belongs to the phenylalanyl-tRNA synthetase beta subunit family. Type 1 subfamily. Tetramer of two alpha and two beta subunits. Mg(2+) is required as a cofactor.

It is found in the cytoplasm. It carries out the reaction tRNA(Phe) + L-phenylalanine + ATP = L-phenylalanyl-tRNA(Phe) + AMP + diphosphate + H(+). In Thermotoga maritima (strain ATCC 43589 / DSM 3109 / JCM 10099 / NBRC 100826 / MSB8), this protein is Phenylalanine--tRNA ligase beta subunit (pheT).